The sequence spans 76 residues: Protein krueppel (76 aa).

C2H2-type zinc fingers lie at residues 11-33 and 39-61; these read FECS…LRLH and YSCP…LRVH.

This sequence belongs to the krueppel C2H2-type zinc-finger protein family.

Its subcellular location is the nucleus. Its function is as follows. Krueppel is a gap class segmentation protein. The polypeptide is Protein krueppel (Kr) (Manduca sexta (Tobacco hawkmoth)).